The primary structure comprises 428 residues: S-adenosylmethionine synthase (428 aa).

An ATP-binding site is contributed by H14. D16 is a binding site for Mg(2+). E42 contacts K(+). L-methionine-binding residues include E55 and Q98. Positions Q98–R108 are flexible loop. ATP contacts are provided by residues D165–K167, K251–F252, D260, R266–K267, A283, and K287. D260 contributes to the L-methionine binding site. K291 contributes to the L-methionine binding site.

It belongs to the AdoMet synthase family. Homotetramer; dimer of dimers. Requires Mg(2+) as cofactor. It depends on K(+) as a cofactor.

The protein localises to the cytoplasm. It catalyses the reaction L-methionine + ATP + H2O = S-adenosyl-L-methionine + phosphate + diphosphate. It functions in the pathway amino-acid biosynthesis; S-adenosyl-L-methionine biosynthesis; S-adenosyl-L-methionine from L-methionine: step 1/1. In terms of biological role, catalyzes the formation of S-adenosylmethionine (AdoMet) from methionine and ATP. The overall synthetic reaction is composed of two sequential steps, AdoMet formation and the subsequent tripolyphosphate hydrolysis which occurs prior to release of AdoMet from the enzyme. The protein is S-adenosylmethionine synthase of Parabacteroides distasonis (strain ATCC 8503 / DSM 20701 / CIP 104284 / JCM 5825 / NCTC 11152).